Consider the following 105-residue polypeptide: Met repressor (105 aa).

It belongs to the MetJ family. As to quaternary structure, homodimer.

It localises to the cytoplasm. Functionally, this regulatory protein, when combined with SAM (S-adenosylmethionine) represses the expression of the methionine regulon and of enzymes involved in SAM synthesis. This chain is Met repressor, found in Pasteurella multocida (strain Pm70).